The sequence spans 85 residues: Large ribosomal subunit protein bL27 (85 aa).

Residues 1–21 (MAHKKAGGSTRNGRDSESKRL) form a disordered region.

Belongs to the bacterial ribosomal protein bL27 family.

This is Large ribosomal subunit protein bL27 from Ectopseudomonas mendocina (strain ymp) (Pseudomonas mendocina).